Here is a 467-residue protein sequence, read N- to C-terminus: Nuclear distribution protein nudF (467 aa).

Residues 9–41 (QAEELHKSIIAYLASVNLTESSAALRAELGDSV) form the LisH domain. Residues 60-87 (TSVVRLQKKIMDLESRCAALQSELDSAT) are a coiled coil. WD repeat units follow at residues 113–154 (GHRN…RTVK), 156–196 (HTKA…KNIR), 200–247 (GHDH…CVKT), 250–289 (GHVD…TKST), 292–352 (GHEH…IKTL), 354–393 (GHDN…KCVR), 398–428 (AHGH…NGTP), and 429–466 (AATS…RIFA). The segment at 417–439 (GANGEAETNGTPAATSTTNGVRP) is disordered. Polar residues predominate over residues 422-436 (AETNGTPAATSTTNG).

This sequence belongs to the WD repeat LIS1/nudF family. Self-associates. Interacts with nudE and dynein.

It localises to the cytoplasm. The protein localises to the cytoskeleton. It is found in the spindle pole. In terms of biological role, positively regulates the activity of the minus-end directed microtubule motor protein dynein. May enhance dynein-mediated microtubule sliding by targeting dynein to the microtubule plus end. Required for nuclear migration during vegetative growth as well as development. Required for retrograde early endosome (EE) transport from the hyphal tip. Required for localization of dynein to the mitotic spindle poles. Recruits additional proteins to the dynein complex at SPBs. The protein is Nuclear distribution protein nudF of Aspergillus fumigatus (strain CBS 144.89 / FGSC A1163 / CEA10) (Neosartorya fumigata).